The chain runs to 575 residues: Electron transfer flavoprotein-ubiquinone oxidoreductase, mitochondrial (575 aa).

A mitochondrion-targeting transit peptide spans 1–33; it reads MQRVLRAAAAGIGHASGHRAPRWGAAAAAARWL. 44 to 58 contributes to the FAD binding site; the sequence is VVVVGAGPAGLAAAI. An intramembrane segment occupies 82 to 103; the sequence is VGAHVLSGNVFEPRALDELIPK. Gly-276 and Gly-277 together coordinate a ubiquinone. An intramembrane segment occupies 343–363; it reads IPNPVFPGGAIIGCSAGFLNV. [4Fe-4S] cluster contacts are provided by Cys-520, Cys-544, Cys-547, and Cys-550. The 4Fe-4S ferredoxin-type domain occupies 535–564; sequence QKLHINAQNCLHCKACDIKDPKQNIEWTVP.

The protein belongs to the ETF-QO/FixC family. [4Fe-4S] cluster is required as a cofactor. FAD serves as cofactor.

It localises to the mitochondrion inner membrane. It carries out the reaction a ubiquinone + reduced [electron-transfer flavoprotein] = a ubiquinol + oxidized [electron-transfer flavoprotein] + H(+). Accepts electrons from ETF and reduces ubiquinone. This chain is Electron transfer flavoprotein-ubiquinone oxidoreductase, mitochondrial, found in Oryza sativa subsp. japonica (Rice).